A 196-amino-acid polypeptide reads, in one-letter code: Small ribosomal subunit protein uS4c (196 aa).

Residues 89 to 149 enclose the S4 RNA-binding domain; sequence MRLDNILFRL…DKQRSKALIQ (61 aa).

This sequence belongs to the universal ribosomal protein uS4 family. As to quaternary structure, part of the 30S ribosomal subunit. Contacts protein S5. The interaction surface between S4 and S5 is involved in control of translational fidelity.

It localises to the plastid. Its subcellular location is the chloroplast. Functionally, one of the primary rRNA binding proteins, it binds directly to 16S rRNA where it nucleates assembly of the body of the 30S subunit. In terms of biological role, with S5 and S12 plays an important role in translational accuracy. This is Small ribosomal subunit protein uS4c (rps4) from Asparagus maritimus (Sea asparagus).